A 444-amino-acid polypeptide reads, in one-letter code: MKKFPEGFLWGVATASYQIEGSPLADGAGMSIWHTFSHTPGNVKNGDTGDVACDHYNRWKEDIEIIEKIGAKAYRFSISWPRILPEGTGKVNQKGLDFYNRIIDTLLEKNITPFITIYHWDLPFSLQLKGGWANRDIADWFAEYSRVLFENFGDRVKHWITLNEPWVVAIVGHLYGVHAPGMKDIYVAFHTVHNLLRAHAKSVKVFRETVKDGKIGIVFNNGYFEPASEREEDIRAARFMHQFNNYPLFLNPIYRGEYPDLVLEFAREYLPRNYEDDMEEIKQEIDFVGLNYYSGHMVKYDPNSPARVSFVERNLPKTAMGWEIVPEGIYWILKGVKEEYNPQEVYITENGAAFDDVVSEGGKVHDQNRIDYLRAHIEQVWRAIQDGVPLKGYFVWSLLDNFEWAEGYSKRFGIVYVDYNTQKRIIKDSGYWYSNVIKNNGLTD.

Glutamate 164 acts as the Proton donor in catalysis. The Nucleophile role is filled by glutamate 349.

Belongs to the glycosyl hydrolase 1 family. In terms of assembly, monomer.

It catalyses the reaction Hydrolysis of (1-&gt;4)-linkages in (1-&gt;4)-beta-D-glucans, to remove successive glucose units.. The catalysed reaction is Hydrolysis of terminal, non-reducing beta-D-glucosyl residues with release of beta-D-glucose.. The protein operates within glycan metabolism; cellulose degradation. It functions in the pathway glycan metabolism; beta-D-glucan degradation. Activated by glucose up to 200 mM when p-nitrophenyl-beta-glucoside is used as the substrate. This activation by end product concentrations may be due to a transglycosylation activity of the enzyme. Broad substrate specificity glycosidase. Releases glucose from soluble glucooligomers, with a preference for longer oligomers; acts more readily on cellotetraose than on cellobiose. Displays similar activities towards the disaccharides lactose and cellobiose. Is also able to hydrolyze various aryl-beta-glycosides in vitro. This chain is 1,4-beta-D-glucan glucohydrolase, found in Thermotoga neapolitana (strain ATCC 49049 / DSM 4359 / NBRC 107923 / NS-E).